The following is a 284-amino-acid chain: Bifunctional protein FolD 1 (284 aa).

Residues 166–168, Ser-191, and Ile-232 each bind NADP(+); that span reads GAS.

It belongs to the tetrahydrofolate dehydrogenase/cyclohydrolase family. In terms of assembly, homodimer.

It carries out the reaction (6R)-5,10-methylene-5,6,7,8-tetrahydrofolate + NADP(+) = (6R)-5,10-methenyltetrahydrofolate + NADPH. It catalyses the reaction (6R)-5,10-methenyltetrahydrofolate + H2O = (6R)-10-formyltetrahydrofolate + H(+). It participates in one-carbon metabolism; tetrahydrofolate interconversion. Catalyzes the oxidation of 5,10-methylenetetrahydrofolate to 5,10-methenyltetrahydrofolate and then the hydrolysis of 5,10-methenyltetrahydrofolate to 10-formyltetrahydrofolate. This chain is Bifunctional protein FolD 1, found in Hydrogenovibrio crunogenus (strain DSM 25203 / XCL-2) (Thiomicrospira crunogena).